Here is a 147-residue protein sequence, read N- to C-terminus: Large ribosomal subunit protein uL11 (147 aa).

It belongs to the universal ribosomal protein uL11 family. Part of the ribosomal stalk of the 50S ribosomal subunit. Interacts with L10 and the large rRNA to form the base of the stalk. L10 forms an elongated spine to which L12 dimers bind in a sequential fashion forming a multimeric L10(L12)X complex. Post-translationally, one or more lysine residues are methylated.

Functionally, forms part of the ribosomal stalk which helps the ribosome interact with GTP-bound translation factors. In Metamycoplasma arthritidis (strain 158L3-1) (Mycoplasma arthritidis), this protein is Large ribosomal subunit protein uL11.